The primary structure comprises 138 residues: Small ribosomal subunit protein uS11c (138 aa).

Residues 1–23 are disordered; the sequence is MAKAIPRRSSRRNGRIGSRKSAR.

This sequence belongs to the universal ribosomal protein uS11 family. In terms of assembly, part of the 30S ribosomal subunit.

It localises to the plastid. It is found in the chloroplast. The polypeptide is Small ribosomal subunit protein uS11c (Ipomoea purpurea (Common morning glory)).